Reading from the N-terminus, the 681-residue chain is Sodium-dependent phosphate transporter 1 (681 aa).

6 helical membrane-spanning segments follow: residues 25–45, 66–86, 106–126, 162–182, 207–227, and 234–254; these read YLWM…SVGA, ACIL…AKVS, LMAG…VASF, IVMS…ILFF, ACTV…LLGF, and GTIL…WFFV. A phosphoserine mark is found at Ser-269 and Ser-273. Residues 269-296 are disordered; sequence SPSESPLMEKKNSLKEDHEETKLSVSDI. Residues 275–290 are compositionally biased toward basic and acidic residues; that stretch reads LMEKKNSLKEDHEETK. The next 4 helical transmembrane spans lie at 515–535, 562–582, 604–624, and 654–674; these read VSLL…FAHG, VATP…GLWV, FSIE…GLPI, and IFMA…AIMA. The interval 554 to 562 is a; sequence DTGDVSSKV.

It belongs to the inorganic phosphate transporter (PiT) (TC 2.A.20) family.

It is found in the cell membrane. It carries out the reaction 2 Na(+)(out) + phosphate(out) = 2 Na(+)(in) + phosphate(in). Sodium-phosphate symporter which preferentially transports the monovalent form of phosphate with a stoichiometry of two sodium ions per phosphate ion. May play a role in extracellular matrix and cartilage calcification as well as in vascular calcification. Essential for cell proliferation but this function is independent of its phosphate transporter activity. This chain is Sodium-dependent phosphate transporter 1 (Slc20a1), found in Felis catus (Cat).